Here is a 34-residue protein sequence, read N- to C-terminus: Small ribosomal subunit protein uS2c (34 aa).

It belongs to the universal ribosomal protein uS2 family.

It localises to the plastid. The protein resides in the chloroplast. This Ochrosphaera neapolitana protein is Small ribosomal subunit protein uS2c (rps2).